The primary structure comprises 192 residues: Der GTPase-activating protein YihI (192 aa).

Residues 1–80 form a disordered region; sequence MSRTKKTRRI…KAAVKEVKDP (80 aa). Composition is skewed to basic and acidic residues over residues 9–25, 37–48, and 65–80; these read RITD…KPEQ, TRYELDAKAREE, and DPAE…VKDP.

The protein belongs to the YihI family. Interacts with Der.

Functionally, a GTPase-activating protein (GAP) that modifies Der/EngA GTPase function. May play a role in ribosome biogenesis. The protein is Der GTPase-activating protein YihI of Actinobacillus pleuropneumoniae serotype 7 (strain AP76).